A 133-amino-acid chain; its full sequence is Ribosome-binding factor A (133 aa).

Belongs to the RbfA family. In terms of assembly, monomer. Binds 30S ribosomal subunits, but not 50S ribosomal subunits or 70S ribosomes.

It localises to the cytoplasm. One of several proteins that assist in the late maturation steps of the functional core of the 30S ribosomal subunit. Associates with free 30S ribosomal subunits (but not with 30S subunits that are part of 70S ribosomes or polysomes). Required for efficient processing of 16S rRNA. May interact with the 5'-terminal helix region of 16S rRNA. This is Ribosome-binding factor A from Salmonella typhimurium (strain LT2 / SGSC1412 / ATCC 700720).